We begin with the raw amino-acid sequence, 265 residues long: Thiazole synthase (265 aa).

The active-site Schiff-base intermediate with DXP is the K103. 1-deoxy-D-xylulose 5-phosphate contacts are provided by residues G164, 190–191, and 212–213; these read AG and NT.

Belongs to the ThiG family. Homotetramer. Forms heterodimers with either ThiH or ThiS.

It is found in the cytoplasm. It carries out the reaction [ThiS sulfur-carrier protein]-C-terminal-Gly-aminoethanethioate + 2-iminoacetate + 1-deoxy-D-xylulose 5-phosphate = [ThiS sulfur-carrier protein]-C-terminal Gly-Gly + 2-[(2R,5Z)-2-carboxy-4-methylthiazol-5(2H)-ylidene]ethyl phosphate + 2 H2O + H(+). It participates in cofactor biosynthesis; thiamine diphosphate biosynthesis. Functionally, catalyzes the rearrangement of 1-deoxy-D-xylulose 5-phosphate (DXP) to produce the thiazole phosphate moiety of thiamine. Sulfur is provided by the thiocarboxylate moiety of the carrier protein ThiS. In vitro, sulfur can be provided by H(2)S. This Bordetella avium (strain 197N) protein is Thiazole synthase.